We begin with the raw amino-acid sequence, 61 residues long: Translational regulator CsrA (61 aa).

The protein belongs to the CsrA/RsmA family. As to quaternary structure, homodimer; the beta-strands of each monomer intercalate to form a hydrophobic core, while the alpha-helices form wings that extend away from the core.

The protein resides in the cytoplasm. In terms of biological role, a key translational regulator that binds mRNA to regulate translation initiation and/or mRNA stability. Mediates global changes in gene expression, shifting from rapid growth to stress survival by linking envelope stress, the stringent response and the catabolite repression systems. Usually binds in the 5'-UTR; binding at or near the Shine-Dalgarno sequence prevents ribosome-binding, repressing translation, binding elsewhere in the 5'-UTR can activate translation and/or stabilize the mRNA. Its function is antagonized by small RNA(s). This Glaesserella parasuis serovar 5 (strain SH0165) (Haemophilus parasuis) protein is Translational regulator CsrA.